Reading from the N-terminus, the 556-residue chain is Oxygen-dependent choline dehydrogenase (556 aa).

FAD is bound at residue Asp-6–Glu-35. His-475 (proton acceptor) is an active-site residue.

This sequence belongs to the GMC oxidoreductase family. FAD is required as a cofactor.

It carries out the reaction choline + A = betaine aldehyde + AH2. The catalysed reaction is betaine aldehyde + NAD(+) + H2O = glycine betaine + NADH + 2 H(+). Its pathway is amine and polyamine biosynthesis; betaine biosynthesis via choline pathway; betaine aldehyde from choline (cytochrome c reductase route): step 1/1. Its function is as follows. Involved in the biosynthesis of the osmoprotectant glycine betaine. Catalyzes the oxidation of choline to betaine aldehyde and betaine aldehyde to glycine betaine at the same rate. This is Oxygen-dependent choline dehydrogenase from Xanthomonas axonopodis pv. citri (strain 306).